Consider the following 274-residue polypeptide: 2-dehydro-3-deoxyphosphooctonate aldolase (274 aa).

Belongs to the KdsA family.

It is found in the cytoplasm. The enzyme catalyses D-arabinose 5-phosphate + phosphoenolpyruvate + H2O = 3-deoxy-alpha-D-manno-2-octulosonate-8-phosphate + phosphate. The protein operates within carbohydrate biosynthesis; 3-deoxy-D-manno-octulosonate biosynthesis; 3-deoxy-D-manno-octulosonate from D-ribulose 5-phosphate: step 2/3. Its pathway is bacterial outer membrane biogenesis; lipopolysaccharide biosynthesis. This is 2-dehydro-3-deoxyphosphooctonate aldolase from Rickettsia peacockii (strain Rustic).